A 165-amino-acid polypeptide reads, in one-letter code: MYERGAFVADHVEPVADDQIQPNGVDLTVDAVLEQTEPGRIDTDGKTIGDRSPVTPTADEDSTDTTVTIQPGTYILQYAETITIPENHVGFVYPRSSLMRNSCMLHSAVWDAGYTGRGEGLFEVHHEITIARGARVAQLVLATGDHENTYDGSYQHERTDTRPGE.

Basic and acidic residues predominate over residues Gly39–Gly49. The tract at residues Gly39–Asp64 is disordered.

This sequence belongs to the dCTP deaminase family. Archaeal dUTPase subfamily.

It catalyses the reaction dUTP + H2O = dUMP + diphosphate + H(+). Its pathway is pyrimidine metabolism; dUMP biosynthesis; dUMP from dCTP (dUTP route): step 2/2. Its function is as follows. This enzyme is involved in nucleotide metabolism: it produces dUMP, the immediate precursor of thymidine nucleotides and it decreases the intracellular concentration of dUTP so that uracil cannot be incorporated into DNA. In Halobacterium salinarum (strain ATCC 29341 / DSM 671 / R1), this protein is Probable deoxyuridine 5'-triphosphate nucleotidohydrolase.